The chain runs to 208 residues: Putative dioxygenase RT0384 (208 aa).

The protein belongs to the intradiol ring-cleavage dioxygenase family.

The sequence is that of Putative dioxygenase RT0384 from Rickettsia typhi (strain ATCC VR-144 / Wilmington).